Consider the following 378-residue polypeptide: tRNA N(3)-cytidine methyltransferase METTL2 (378 aa).

S-adenosyl-L-methionine contacts are provided by Trp-78, Tyr-82, Gly-188, Asp-213, Asp-239, Leu-240, and Ile-260.

The protein belongs to the methyltransferase superfamily. METL family. As to quaternary structure, monomer. Interacts with DALRD3.

The protein resides in the cytoplasm. The enzyme catalyses cytidine(32) in tRNA(Thr) + S-adenosyl-L-methionine = N(3)-methylcytidine(32) in tRNA(Thr) + S-adenosyl-L-homocysteine + H(+). The catalysed reaction is cytidine(32) in tRNA(Arg)(CCU) + S-adenosyl-L-methionine = N(3)-methylcytidine(32) in tRNA(Arg)(CCU) + S-adenosyl-L-homocysteine + H(+). Functionally, S-adenosyl-L-methionine-dependent methyltransferase that mediates N(3)-methylcytidine modification of residue 32 of the tRNA anticodon loop of tRNA(Thr)(UGU) and tRNA(Arg)(CCU). N(3)-methylcytidine methylation by METTL2 requires the N6-threonylcarbamoylation of tRNA (t6A37) by the EKC/KEOPS complex as prerequisite. This Bos taurus (Bovine) protein is tRNA N(3)-cytidine methyltransferase METTL2 (METTL2).